The primary structure comprises 449 residues: uncharacterized protein (449 aa).

The segment covering 1-11 (MLDAPEQDPVD) has biased composition (acidic residues). The interval 1-33 (MLDAPEQDPVDPGDPASPPHGEAEQPLPGPRWP) is disordered. The helical transmembrane segment at 45-65 (LLLTALGGLLIAGLVTAIPAV) threads the bilayer. The interval 349 to 449 (QPPVPPPDIP…PGPAEPAPAG (101 aa)) is disordered. Residues 365-387 (PPIPLQLPTPRPAPPAQQLPSTP) show a composition bias toward pro residues. Residues 409–418 (HAPASAAPAE) show a composition bias toward low complexity. The segment covering 437–449 (ATPPGPAEPAPAG) has biased composition (pro residues).

Its subcellular location is the cell membrane. It is found in the secreted. Its function is as follows. May play a role in septum formation. This is an uncharacterized protein from Mycobacterium tuberculosis (strain CDC 1551 / Oshkosh).